Here is a 1187-residue protein sequence, read N- to C-terminus: Intraflagellar transport protein 122 homolog (1187 aa).

WD repeat units follow at residues 16–54 (KVEQCIYDLAFRPDGSQLIVAAGNRVLVYDTADGTLIQP), 57–97 (GHKD…LKYT), 99–135 (NDSIQCVSYNPVTHQLASCSSGDFGLWSPEQKSVSKH), 137–175 (VSSKITCCGWTNDGQYLALGMMNGVVSIRNKNGEEKVKI), 180–223 (GSSS…IGKD), 225–264 (SLTFDPCCVSFFSKGEYMVLCGSDRQAALYTRDGVRLGSI), 266–306 (EQNA…HGLY), and 459–498 (KQNTSVRCLDMSSNRSRLAVVDEHNTCLVYDIHTRELLFQ). The disordered stretch occupies residues 1070–1094 (KSWQEMSSGESQCLKLEDGPDDPED).

As to quaternary structure, component of the IFT complex A (IFT-A) complex.

Its subcellular location is the cell projection. It localises to the cilium. The protein resides in the cytoplasm. The protein localises to the cytoskeleton. It is found in the cilium basal body. Its function is as follows. Required for cilia formation during embryonal development. Acts as a negative regulator of Shh signaling. The chain is Intraflagellar transport protein 122 homolog (ift122) from Danio rerio (Zebrafish).